We begin with the raw amino-acid sequence, 301 residues long: Mitochondrial import receptor subunit TOM40 homolog (301 aa).

Residues 1 to 19 (MATPTESELASPIPQTNPG) are compositionally biased toward polar residues. The segment at 1 to 20 (MATPTESELASPIPQTNPGS) is disordered.

Belongs to the Tom40 family. As to quaternary structure, forms part of the preprotein translocase complex of the outer mitochondrial membrane (TOM complex). Interacts with mitochondrial targeting sequences. As to expression, ubiquitously expressed, but highly expressed in the pharyngeal muscles, the nerve ring, the intestine, gonadal sheath and in the tail hypodermis.

The protein resides in the mitochondrion outer membrane. Functionally, channel-forming protein essential for import of protein precursors into mitochondria. Specifically required for nnt-1 accumulation in the mitochondria and may be involved in the secretion of daf-28/insulin from the mitochondria. Required for embryonic and larval development. In Caenorhabditis elegans, this protein is Mitochondrial import receptor subunit TOM40 homolog.